Here is a 353-residue protein sequence, read N- to C-terminus: Photosystem II D2 protein (353 aa).

The residue at position 2 (threonine 2) is an N-acetylthreonine. Threonine 2 carries the phosphothreonine modification. Residues 41–61 (CAYFALGGWFTGTTFVTSWYT) form a helical membrane-spanning segment. Histidine 118 serves as a coordination point for chlorophyll a. The helical transmembrane segment at 125–141 (GFMLRQFELARSVQLRP) threads the bilayer. Positions 130 and 143 each coordinate pheophytin a. The helical transmembrane segment at 153–166 (VFVSVFLIYPLGQS) threads the bilayer. A chlorophyll a-binding site is contributed by histidine 198. The chain crosses the membrane as a helical span at residues 208-228 (AALLCAIHGATVENTLFEDGD). Residues histidine 215 and phenylalanine 262 each contribute to the a plastoquinone site. A Fe cation-binding site is contributed by histidine 215. Fe cation is bound at residue histidine 269. A helical membrane pass occupies residues 279 to 295 (GLWMSALGVVGLALNLR).

Belongs to the reaction center PufL/M/PsbA/D family. In terms of assembly, PSII is composed of 1 copy each of membrane proteins PsbA, PsbB, PsbC, PsbD, PsbE, PsbF, PsbH, PsbI, PsbJ, PsbK, PsbL, PsbM, PsbT, PsbX, PsbY, PsbZ, Psb30/Ycf12, at least 3 peripheral proteins of the oxygen-evolving complex and a large number of cofactors. It forms dimeric complexes. It depends on The D1/D2 heterodimer binds P680, chlorophylls that are the primary electron donor of PSII, and subsequent electron acceptors. It shares a non-heme iron and each subunit binds pheophytin, quinone, additional chlorophylls, carotenoids and lipids. There is also a Cl(-1) ion associated with D1 and D2, which is required for oxygen evolution. The PSII complex binds additional chlorophylls, carotenoids and specific lipids. as a cofactor.

The protein resides in the plastid. Its subcellular location is the chloroplast thylakoid membrane. It carries out the reaction 2 a plastoquinone + 4 hnu + 2 H2O = 2 a plastoquinol + O2. Functionally, photosystem II (PSII) is a light-driven water:plastoquinone oxidoreductase that uses light energy to abstract electrons from H(2)O, generating O(2) and a proton gradient subsequently used for ATP formation. It consists of a core antenna complex that captures photons, and an electron transfer chain that converts photonic excitation into a charge separation. The D1/D2 (PsbA/PsbD) reaction center heterodimer binds P680, the primary electron donor of PSII as well as several subsequent electron acceptors. D2 is needed for assembly of a stable PSII complex. This chain is Photosystem II D2 protein, found in Ceratophyllum demersum (Rigid hornwort).